A 196-amino-acid chain; its full sequence is GTP cyclohydrolase 1 (196 aa).

Zn(2+)-binding residues include Cys-86, His-89, and Cys-158.

It belongs to the GTP cyclohydrolase I family. Toroid-shaped homodecamer, composed of two pentamers of five dimers.

The enzyme catalyses GTP + H2O = 7,8-dihydroneopterin 3'-triphosphate + formate + H(+). Its pathway is cofactor biosynthesis; 7,8-dihydroneopterin triphosphate biosynthesis; 7,8-dihydroneopterin triphosphate from GTP: step 1/1. This chain is GTP cyclohydrolase 1, found in Clostridium botulinum (strain Langeland / NCTC 10281 / Type F).